Consider the following 484-residue polypeptide: tRNA sulfurtransferase (484 aa).

The region spanning 63-167 (DVFADRLACI…QDKLYMVERR (105 aa)) is the THUMP domain. Residues 185–186 (LI), K267, G289, and Q298 each bind ATP. An intrachain disulfide couples C346 to C458. Residues 406 to 484 (VASGEIIIDV…GYTNVKVYRP (79 aa)) enclose the Rhodanese domain. The active-site Cysteine persulfide intermediate is C458.

The protein belongs to the ThiI family.

The protein resides in the cytoplasm. The catalysed reaction is [ThiI sulfur-carrier protein]-S-sulfanyl-L-cysteine + a uridine in tRNA + 2 reduced [2Fe-2S]-[ferredoxin] + ATP + H(+) = [ThiI sulfur-carrier protein]-L-cysteine + a 4-thiouridine in tRNA + 2 oxidized [2Fe-2S]-[ferredoxin] + AMP + diphosphate. The enzyme catalyses [ThiS sulfur-carrier protein]-C-terminal Gly-Gly-AMP + S-sulfanyl-L-cysteinyl-[cysteine desulfurase] + AH2 = [ThiS sulfur-carrier protein]-C-terminal-Gly-aminoethanethioate + L-cysteinyl-[cysteine desulfurase] + A + AMP + 2 H(+). It functions in the pathway cofactor biosynthesis; thiamine diphosphate biosynthesis. Functionally, catalyzes the ATP-dependent transfer of a sulfur to tRNA to produce 4-thiouridine in position 8 of tRNAs, which functions as a near-UV photosensor. Also catalyzes the transfer of sulfur to the sulfur carrier protein ThiS, forming ThiS-thiocarboxylate. This is a step in the synthesis of thiazole, in the thiamine biosynthesis pathway. The sulfur is donated as persulfide by IscS. This Shewanella frigidimarina (strain NCIMB 400) protein is tRNA sulfurtransferase.